The sequence spans 306 residues: Sulfate adenylyltransferase subunit 2 (306 aa).

It belongs to the PAPS reductase family. CysD subfamily. In terms of assembly, heterodimer composed of CysD, the smaller subunit, and CysN.

The enzyme catalyses sulfate + ATP + H(+) = adenosine 5'-phosphosulfate + diphosphate. It functions in the pathway sulfur metabolism; hydrogen sulfide biosynthesis; sulfite from sulfate: step 1/3. Functionally, with CysN forms the ATP sulfurylase (ATPS) that catalyzes the adenylation of sulfate producing adenosine 5'-phosphosulfate (APS) and diphosphate, the first enzymatic step in sulfur assimilation pathway. APS synthesis involves the formation of a high-energy phosphoric-sulfuric acid anhydride bond driven by GTP hydrolysis by CysN coupled to ATP hydrolysis by CysD. This is Sulfate adenylyltransferase subunit 2 from Brucella anthropi (strain ATCC 49188 / DSM 6882 / CCUG 24695 / JCM 21032 / LMG 3331 / NBRC 15819 / NCTC 12168 / Alc 37) (Ochrobactrum anthropi).